The chain runs to 225 residues: Enolase-phosphatase E1 (225 aa).

Belongs to the HAD-like hydrolase superfamily. MasA/MtnC family. Monomer. The cofactor is Mg(2+).

It carries out the reaction 5-methylsulfanyl-2,3-dioxopentyl phosphate + H2O = 1,2-dihydroxy-5-(methylsulfanyl)pent-1-en-3-one + phosphate. It functions in the pathway amino-acid biosynthesis; L-methionine biosynthesis via salvage pathway; L-methionine from S-methyl-5-thio-alpha-D-ribose 1-phosphate: step 3/6. It participates in amino-acid biosynthesis; L-methionine biosynthesis via salvage pathway; L-methionine from S-methyl-5-thio-alpha-D-ribose 1-phosphate: step 4/6. Functionally, bifunctional enzyme that catalyzes the enolization of 2,3-diketo-5-methylthiopentyl-1-phosphate (DK-MTP-1-P) into the intermediate 2-hydroxy-3-keto-5-methylthiopentenyl-1-phosphate (HK-MTPenyl-1-P), which is then dephosphorylated to form the acireductone 1,2-dihydroxy-3-keto-5-methylthiopentene (DHK-MTPene). In Shewanella loihica (strain ATCC BAA-1088 / PV-4), this protein is Enolase-phosphatase E1.